A 586-amino-acid chain; its full sequence is Phosphatidylinositol-3-phosphatase SAC1-B (586 aa).

Residues 1-519 (MASTYNSFNL…TPLHEPKDWK (519 aa)) are Cytoplasmic-facing. The SAC domain maps to 121–450 (LNSVLNTDGF…ANACAKQYAG (330 aa)). The tract at residues 451 to 586 (TGALKTDFTR…PRLVQKEKMD (136 aa)) is essential for phosphatidylinositol-4-phosphate phosphatase activity. The helical transmembrane segment at 520-540 (FLTLPIIMVVAFSMCIICLLM) threads the bilayer. Residues 541–547 (AGDTWTE) are Lumenal-facing. A helical transmembrane segment spans residues 548–568 (TLAYVLFWGSASVVTGGVILF). Topologically, residues 569–586 (NGRDFVDAPRLVQKEKMD) are cytoplasmic.

The protein localises to the endoplasmic reticulum membrane. Its subcellular location is the golgi apparatus membrane. The enzyme catalyses a 1,2-diacyl-sn-glycero-3-phospho-(1D-myo-inositol-3-phosphate) + H2O = a 1,2-diacyl-sn-glycero-3-phospho-(1D-myo-inositol) + phosphate. It carries out the reaction a 1,2-diacyl-sn-glycero-3-phospho-(1D-myo-inositol 4-phosphate) + H2O = a 1,2-diacyl-sn-glycero-3-phospho-(1D-myo-inositol) + phosphate. Functionally, phosphoinositide phosphatase which catalyzes the hydrolysis of phosphatidylinositol 4-phosphate (PtdIns(4)P), phosphatidylinositol 3-phosphate (PtdIns(3)P) and has low activity towards phosphatidylinositol-3,5-bisphosphate (PtdIns(3,5)P2). This is Phosphatidylinositol-3-phosphatase SAC1-B (sacm1lb) from Danio rerio (Zebrafish).